A 256-amino-acid polypeptide reads, in one-letter code: Omega-amidase YafV (256 aa).

The CN hydrolase domain occupies 4–234 (LKLTLLQQPL…AAQLDAELSL (231 aa)). Catalysis depends on Glu-42, which acts as the Proton acceptor. Lys-107 is a catalytic residue. The Nucleophile role is filled by Cys-141.

It belongs to the carbon-nitrogen hydrolase superfamily. NIT1/NIT2 family.

It carries out the reaction a monoamide of a dicarboxylate + H2O = a dicarboxylate + NH4(+). Hydrolyzes alpha-ketoglutaramate (a-KGM) to alpha-ketoglutarate (alpha-KG) and ammonia (specific activity 21 umol/min/mg), has very weak activity on L-glutamine, and no activity on deaminated glutathione (dGSH) or glutathione. May function as a metabolite repair enzyme. The chain is Omega-amidase YafV from Yersinia enterocolitica.